Reading from the N-terminus, the 287-residue chain is ATP synthase gamma chain (287 aa).

Belongs to the ATPase gamma chain family. As to quaternary structure, F-type ATPases have 2 components, CF(1) - the catalytic core - and CF(0) - the membrane proton channel. CF(1) has five subunits: alpha(3), beta(3), gamma(1), delta(1), epsilon(1). CF(0) has three main subunits: a, b and c.

It localises to the cell inner membrane. Its function is as follows. Produces ATP from ADP in the presence of a proton gradient across the membrane. The gamma chain is believed to be important in regulating ATPase activity and the flow of protons through the CF(0) complex. The chain is ATP synthase gamma chain from Salmonella gallinarum (strain 287/91 / NCTC 13346).